The following is a 78-amino-acid chain: uncharacterized protein (78 aa).

Residues 20–78 are disordered; the sequence is LQDLFPPHFGNEEADEDDEDGDKYGDDDGEFYGDNDGDNDGDNDGVNDGVGDGPPSTLL. Acidic residues predominate over residues 31–64; the sequence is EEADEDDEDGDKYGDDDGEFYGDNDGDNDGDNDG.

This is an uncharacterized protein from Dictyostelium discoideum (Social amoeba).